We begin with the raw amino-acid sequence, 198 residues long: Holliday junction branch migration complex subunit RuvA (198 aa).

The tract at residues 1-63 (MIALLTGQIA…EDAIQLYGFR (63 aa)) is domain I. Residues 64-142 (TSLEKSFFQL…KLDLSSVVVP (79 aa)) form a domain II region. Residues 143–153 (EPRQMPEDDLL) are flexible linker. The interval 153–198 (LEDVVSALLNLGYKEPQVRKVLAGLNPGSDASLEGVLKQALKSLMR) is domain III.

Belongs to the RuvA family. Homotetramer. Forms an RuvA(8)-RuvB(12)-Holliday junction (HJ) complex. HJ DNA is sandwiched between 2 RuvA tetramers; dsDNA enters through RuvA and exits via RuvB. An RuvB hexamer assembles on each DNA strand where it exits the tetramer. Each RuvB hexamer is contacted by two RuvA subunits (via domain III) on 2 adjacent RuvB subunits; this complex drives branch migration. In the full resolvosome a probable DNA-RuvA(4)-RuvB(12)-RuvC(2) complex forms which resolves the HJ.

It is found in the cytoplasm. The RuvA-RuvB-RuvC complex processes Holliday junction (HJ) DNA during genetic recombination and DNA repair, while the RuvA-RuvB complex plays an important role in the rescue of blocked DNA replication forks via replication fork reversal (RFR). RuvA specifically binds to HJ cruciform DNA, conferring on it an open structure. The RuvB hexamer acts as an ATP-dependent pump, pulling dsDNA into and through the RuvAB complex. HJ branch migration allows RuvC to scan DNA until it finds its consensus sequence, where it cleaves and resolves the cruciform DNA. The protein is Holliday junction branch migration complex subunit RuvA of Pelobacter propionicus (strain DSM 2379 / NBRC 103807 / OttBd1).